The primary structure comprises 231 residues: MAKVSKRLKALRSSVEANKLYAIDEAIALVKKAATAKFDESVDVSFNLGVDPRKSDQVIRGSVVLPKGTGKITRVAVFTQGANAEAAKEAGADIVGFEDLAAEIKAGNLNFDVVIASPDAMRIVGQLGTILGPRGLMPNPKVGTVTPNVAEAVKNAKAGQVQYRTDKAGIVHATIGRASFAEADLKENFDALLDAIVKAKPAAAKGQYLKKVAVSSTMGLGIRVDTSSVNN.

Belongs to the universal ribosomal protein uL1 family. As to quaternary structure, part of the 50S ribosomal subunit.

Functionally, binds directly to 23S rRNA. The L1 stalk is quite mobile in the ribosome, and is involved in E site tRNA release. In terms of biological role, protein L1 is also a translational repressor protein, it controls the translation of the L11 operon by binding to its mRNA. The chain is Large ribosomal subunit protein uL1 from Neisseria meningitidis serogroup A / serotype 4A (strain DSM 15465 / Z2491).